Reading from the N-terminus, the 355-residue chain is Gibberellin 3-beta-dioxygenase 4 (355 aa).

Residues 203-303 form the Fe2OG dioxygenase domain; sequence GRGAIRLNHY…RISIAYLWGG (101 aa). The Fe cation site is built by His-227, Asp-229, and His-284. The active site involves Arg-294.

This sequence belongs to the iron/ascorbate-dependent oxidoreductase family. GA3OX subfamily. The cofactor is L-ascorbate. It depends on Fe cation as a cofactor. As to expression, expressed in siliques and in seeds, specifically at the rim of the embryo and the outer integument. Also expressed in flowers. Not detected in roots, stems and leaves.

It catalyses the reaction gibberellin A20 + 2-oxoglutarate + O2 = gibberellin A1 + succinate + CO2. It functions in the pathway plant hormone biosynthesis; gibberellin biosynthesis. Converts the inactive gibberellin (GA) precursors GA9 and GA20 in the bioactives gibberellins GA4 and GA1. Involved in the production of bioactive GA for reproductive development. This Arabidopsis thaliana (Mouse-ear cress) protein is Gibberellin 3-beta-dioxygenase 4.